The following is an 88-amino-acid chain: UPF0367 protein Synpcc7942_1638 (88 aa).

It belongs to the UPF0367 family.

The polypeptide is UPF0367 protein Synpcc7942_1638 (Synechococcus elongatus (strain ATCC 33912 / PCC 7942 / FACHB-805) (Anacystis nidulans R2)).